The primary structure comprises 468 residues: ATP synthase subunit beta (468 aa).

Position 155–162 (155–162 (GGAGVGKT)) interacts with ATP.

Belongs to the ATPase alpha/beta chains family. In terms of assembly, F-type ATPases have 2 components, CF(1) - the catalytic core - and CF(0) - the membrane proton channel. CF(1) has five subunits: alpha(3), beta(3), gamma(1), delta(1), epsilon(1). CF(0) has three main subunits: a(1), b(2) and c(9-12). The alpha and beta chains form an alternating ring which encloses part of the gamma chain. CF(1) is attached to CF(0) by a central stalk formed by the gamma and epsilon chains, while a peripheral stalk is formed by the delta and b chains.

The protein localises to the cell inner membrane. The catalysed reaction is ATP + H2O + 4 H(+)(in) = ADP + phosphate + 5 H(+)(out). In terms of biological role, produces ATP from ADP in the presence of a proton gradient across the membrane. The catalytic sites are hosted primarily by the beta subunits. In Leptospira biflexa serovar Patoc (strain Patoc 1 / ATCC 23582 / Paris), this protein is ATP synthase subunit beta.